Here is an 865-residue protein sequence, read N- to C-terminus: Leucine--tRNA ligase (865 aa).

Residues 58–68 carry the 'HIGH' region motif; that stretch reads PYPSGNLHMGH. The short motif at 629 to 633 is the 'KMSKS' region element; the sequence is KMSKS. Lys-632 is an ATP binding site.

The protein belongs to the class-I aminoacyl-tRNA synthetase family.

The protein localises to the cytoplasm. The enzyme catalyses tRNA(Leu) + L-leucine + ATP = L-leucyl-tRNA(Leu) + AMP + diphosphate. The polypeptide is Leucine--tRNA ligase (Synechococcus sp. (strain ATCC 27144 / PCC 6301 / SAUG 1402/1) (Anacystis nidulans)).